The sequence spans 461 residues: 23S rRNA (uracil(1939)-C(5))-methyltransferase RlmD (461 aa).

Residues methionine 1 to lysine 26 are disordered. Positions glutamine 20 to arginine 78 constitute a TRAM domain. [4Fe-4S] cluster is bound by residues cysteine 91, cysteine 97, cysteine 100, and cysteine 179. S-adenosyl-L-methionine-binding residues include glutamine 283, phenylalanine 312, asparagine 317, glutamate 333, aspartate 360, and aspartate 381. Cysteine 407 functions as the Nucleophile in the catalytic mechanism.

The protein belongs to the class I-like SAM-binding methyltransferase superfamily. RNA M5U methyltransferase family. RlmD subfamily.

It catalyses the reaction uridine(1939) in 23S rRNA + S-adenosyl-L-methionine = 5-methyluridine(1939) in 23S rRNA + S-adenosyl-L-homocysteine + H(+). Catalyzes the formation of 5-methyl-uridine at position 1939 (m5U1939) in 23S rRNA. The sequence is that of 23S rRNA (uracil(1939)-C(5))-methyltransferase RlmD from Pseudomonas fluorescens (strain Pf0-1).